Here is a 488-residue protein sequence, read N- to C-terminus: Malonate-semialdehyde dehydrogenase 2 (488 aa).

NAD(+) is bound by residues Phe155, Lys179, Glu182, Arg183, and Ser232. Cys287 functions as the Nucleophile in the catalytic mechanism. Residue Glu387 coordinates NAD(+).

It belongs to the aldehyde dehydrogenase family. IolA subfamily. In terms of assembly, homotetramer.

The catalysed reaction is 3-oxopropanoate + NAD(+) + CoA + H2O = hydrogencarbonate + acetyl-CoA + NADH + H(+). The enzyme catalyses 2-methyl-3-oxopropanoate + NAD(+) + CoA + H2O = propanoyl-CoA + hydrogencarbonate + NADH + H(+). Its pathway is polyol metabolism; myo-inositol degradation into acetyl-CoA; acetyl-CoA from myo-inositol: step 7/7. Functionally, catalyzes the oxidation of malonate semialdehyde (MSA) and methylmalonate semialdehyde (MMSA) into acetyl-CoA and propanoyl-CoA, respectively. Is involved in a myo-inositol catabolic pathway. Bicarbonate, and not CO2, is the end-product of the enzymatic reaction. The polypeptide is Malonate-semialdehyde dehydrogenase 2 (Bacillus cereus (strain ZK / E33L)).